Here is a 356-residue protein sequence, read N- to C-terminus: MRVTDFSFELPESLIAHYPMPERSSCRLLLLDGPTGALTHGTFTDLLDKLNPGDLLVFNNTRVIPARLFGRKASGGKIEVLVERMLDDKRILAHIRASKAPKPGAELLLGDDESINATMTARHGALFEVEFNDERSVLDILNSIGHMPLPPYIDRPDEDADRELYQTVYSEKPGAVAAPTAGLHFDEPLLEKLRAKGVEMAFVTLHVGAGTFQPVRVDTIEDHIMHSEYAEVPQDVVDAVLAAKARGNRVIAVGTTSVRSLESAAQAAKNDLIEPFFDDTQIFIYPGFQYKVVDALVTNFHLPESTLIMLVSAFAGYQHTMNAYKAAVEEKYRFFSYGDAMFITYNPQAINERVGE.

Belongs to the QueA family. In terms of assembly, monomer.

The protein resides in the cytoplasm. It carries out the reaction 7-aminomethyl-7-carbaguanosine(34) in tRNA + S-adenosyl-L-methionine = epoxyqueuosine(34) in tRNA + adenine + L-methionine + 2 H(+). The protein operates within tRNA modification; tRNA-queuosine biosynthesis. In terms of biological role, transfers and isomerizes the ribose moiety from AdoMet to the 7-aminomethyl group of 7-deazaguanine (preQ1-tRNA) to give epoxyqueuosine (oQ-tRNA). This Escherichia coli (strain ATCC 8739 / DSM 1576 / NBRC 3972 / NCIMB 8545 / WDCM 00012 / Crooks) protein is S-adenosylmethionine:tRNA ribosyltransferase-isomerase.